The primary structure comprises 563 residues: Dihydroxy-acid dehydratase (563 aa).

[2Fe-2S] cluster is bound at residue C50. D82 contributes to the Mg(2+) binding site. C123 contributes to the [2Fe-2S] cluster binding site. Residues D124 and K125 each contribute to the Mg(2+) site. Position 125 is an N6-carboxylysine (K125). C195 serves as a coordination point for [2Fe-2S] cluster. E447 contacts Mg(2+). S473 functions as the Proton acceptor in the catalytic mechanism.

The protein belongs to the IlvD/Edd family. Homodimer. It depends on [2Fe-2S] cluster as a cofactor. Requires Mg(2+) as cofactor.

The enzyme catalyses (2R)-2,3-dihydroxy-3-methylbutanoate = 3-methyl-2-oxobutanoate + H2O. It catalyses the reaction (2R,3R)-2,3-dihydroxy-3-methylpentanoate = (S)-3-methyl-2-oxopentanoate + H2O. Its pathway is amino-acid biosynthesis; L-isoleucine biosynthesis; L-isoleucine from 2-oxobutanoate: step 3/4. It participates in amino-acid biosynthesis; L-valine biosynthesis; L-valine from pyruvate: step 3/4. Its function is as follows. Functions in the biosynthesis of branched-chain amino acids. Catalyzes the dehydration of (2R,3R)-2,3-dihydroxy-3-methylpentanoate (2,3-dihydroxy-3-methylvalerate) into 2-oxo-3-methylpentanoate (2-oxo-3-methylvalerate) and of (2R)-2,3-dihydroxy-3-methylbutanoate (2,3-dihydroxyisovalerate) into 2-oxo-3-methylbutanoate (2-oxoisovalerate), the penultimate precursor to L-isoleucine and L-valine, respectively. In Nostoc sp. (strain PCC 7120 / SAG 25.82 / UTEX 2576), this protein is Dihydroxy-acid dehydratase.